Reading from the N-terminus, the 282-residue chain is Succinate dehydrogenase [ubiquinone] iron-sulfur subunit, mitochondrial (282 aa).

The transit peptide at 1–21 (MLRGSTSVCRSLELVTQAARY) directs the protein to the mitochondrion. The 2Fe-2S ferredoxin-type domain maps to 39-129 (EIYRFNPEEP…TTKIYPLPHM (91 aa)). Residues Cys-89, Cys-94, Cys-97, and Cys-109 each contribute to the [2Fe-2S] cluster site. A 4Fe-4S ferredoxin-type domain is found at 172–202 (EQEKLDGLYECILCACCSASCPSYWWNADKY). 3 residues coordinate [4Fe-4S] cluster: Cys-182, Cys-185, and Cys-188. Cys-192 provides a ligand contact to [3Fe-4S] cluster. Trp-197 contacts a rhodoquinol. Trp-197 is an a ubiquinone binding site. [3Fe-4S] cluster is bound by residues Cys-239 and Cys-245. Residue Cys-249 coordinates [4Fe-4S] cluster.

Belongs to the succinate dehydrogenase/fumarate reductase iron-sulfur protein family. Component of the mitochondrial electron transport chain complex II composed of four subunits: a flavoprotein (Fp), an iron-sulfur protein (Ip), and a large cytochrome b (CybL) subunit and a small cytochrome b (CybS) subunit. There are 2 developmental stage-specific forms of complex II which have the Ip and CybL subunits in common. Complex II from the free-living larvae (aerobic environment) acts as a succinate dehydrogenase and is composed of the common subunit Ip and CybL and the stage specific subunits FpL and CybSL. Complex II from parasitic larvae and adults (anaerobic environment) acts as a fumarate reductase and is composed of the common subunit Ip and CybL and the stage specific subunits FpA and CybSA. [2Fe-2S] cluster serves as cofactor. [3Fe-4S] cluster is required as a cofactor. The cofactor is [4Fe-4S] cluster. In terms of tissue distribution, expressed in adult muscles (at protein level).

It is found in the mitochondrion inner membrane. The catalysed reaction is a ubiquinone + succinate = a ubiquinol + fumarate. It carries out the reaction a rhodoquinone + succinate = a rhodoquinol + fumarate. Its pathway is carbohydrate metabolism; tricarboxylic acid cycle; fumarate from succinate (eukaryal route): step 1/1. Inhibited by the fungicide flutolanil. Iron-sulfur protein (Ip) subunit of the mitochondrial electron transport chain complex II which, together with the flavoprotein (Fp) subunit forms the catalytic core of the complex. During the free-living egg-larvae stages, which occur in an aerobic environment, complex II acts as a succinate dehydrogenase by transferring electrons from succinate to ubiquinone. During the parasitic larvae and adult stages, which occur in an anaerobic environment, complex II acts as a fumarate reductase by transferring electrons from rhodoquinol to fumarate. This is Succinate dehydrogenase [ubiquinone] iron-sulfur subunit, mitochondrial from Ascaris suum (Pig roundworm).